We begin with the raw amino-acid sequence, 61 residues long: UPF0434 protein PST_2635 (61 aa).

Belongs to the UPF0434 family.

This chain is UPF0434 protein PST_2635, found in Stutzerimonas stutzeri (strain A1501) (Pseudomonas stutzeri).